Reading from the N-terminus, the 214-residue chain is MKFFIDTANIDEIKEAVKMGMADGVTTNPSLIAKESGDFETIIKNICDVVDGPVSAEVISLKTAGMVKEAKQLATLHENIVIKIPMTVDGLKAVRMLADQGIRTNVTLVFSPLQALMAAKAGATYVSPFVGRLDDLASDGMVLVEQIIDIYDNYAIDTEIIVASIRNPLHVLDAALMGADVATIPFGVLKKLAAHPLTDRGIDAFLNDWKKAKK.

Lys83 serves as the catalytic Schiff-base intermediate with substrate.

The protein belongs to the transaldolase family. Type 3B subfamily.

Its subcellular location is the cytoplasm. It carries out the reaction D-sedoheptulose 7-phosphate + D-glyceraldehyde 3-phosphate = D-erythrose 4-phosphate + beta-D-fructose 6-phosphate. Its pathway is carbohydrate degradation; pentose phosphate pathway; D-glyceraldehyde 3-phosphate and beta-D-fructose 6-phosphate from D-ribose 5-phosphate and D-xylulose 5-phosphate (non-oxidative stage): step 2/3. Its function is as follows. Transaldolase is important for the balance of metabolites in the pentose-phosphate pathway. The sequence is that of Probable transaldolase from Desulfosudis oleivorans (strain DSM 6200 / JCM 39069 / Hxd3) (Desulfococcus oleovorans).